A 317-amino-acid polypeptide reads, in one-letter code: uncharacterized protein (317 aa).

This is an uncharacterized protein from Borreliella burgdorferi (strain ATCC 35210 / DSM 4680 / CIP 102532 / B31) (Borrelia burgdorferi).